A 613-amino-acid chain; its full sequence is Azole resistance protein 1 (613 aa).

Residues 1–38 are disordered; it reads MKGEPKTYSMSDLSYYGEKAQQQNEKQQKQYVVRRNST. The Extracellular segment spans residues 1–70; that stretch reads MKGEPKTYSM…PKGFILYASL (70 aa). A helical membrane pass occupies residues 71-91; it reads IALALSLFLAALDIMIVSTII. Residues 92–102 lie on the Cytoplasmic side of the membrane; sequence EEVAKQFGSYS. Residues 103–123 form a helical membrane-spanning segment; it reads EIGWLFTGYSLPNALLALIWG. The Extracellular segment spans residues 124–134; it reads RIATPIGFKET. A helical transmembrane segment spans residues 135 to 155; that stretch reads MLFAIVIFEIGSLISALANSM. At 156–163 the chain is on the cytoplasmic side; it reads SMLIGGRV. The chain crosses the membrane as a helical span at residues 164–184; sequence IAGVGGCGIQSLSFVIGSTLV. Residues 185-189 lie on the Extracellular side of the membrane; that stretch reads EESQR. A helical transmembrane segment spans residues 190–210; the sequence is GILIAVLSCSFAIASVVGPFL. Residues 211 to 221 lie on the Cytoplasmic side of the membrane; sequence GGVFTSSVTWR. A helical transmembrane segment spans residues 222-242; that stretch reads WCFYVNLPIGGLAFFLFLFFY. Residues 243–298 are Extracellular-facing; that stretch reads NPGLSTFQETMDNIRKFPSQFIEIVRNVAYHLLKIKGFSKLNGWRKPFMELIFMYD. The chain crosses the membrane as a helical span at residues 299-319; that stretch reads IIEFVFCSAGFTCILLAFTFG. Residues 320–329 are Cytoplasmic-facing; the sequence is GNRYAWNSAS. A helical transmembrane segment spans residues 330–350; that stretch reads IIILFIIGIVLVVLAGIYDFL. Residues 351 to 375 lie on the Extracellular side of the membrane; sequence VFPKFNIVKATPHYQPLMSWTNIKK. A helical transmembrane segment spans residues 376-396; that stretch reads PGIFTVNIALFLTCAGYISQF. Topologically, residues 397–414 are cytoplasmic; it reads TYIVQYFQLIYNDSAWRA. A helical membrane pass occupies residues 415–435; sequence AVHLVACIISTVVTAILCGAI. The Extracellular portion of the chain corresponds to 436–443; that stretch reads TDKTRQIK. Residues 444 to 464 traverse the membrane as a helical segment; the sequence is PIIVISSIFGVVGAGILTLLN. Topologically, residues 465–472 are cytoplasmic; it reads NNANNSAH. Residues 473 to 493 form a helical membrane-spanning segment; sequence IGLLILPGVAFGGLAQSSMLA. Topologically, residues 494 to 581 are extracellular; sequence SQIQLDKKSP…SKLGNIISES (88 aa). A helical transmembrane segment spans residues 582-602; it reads LTDVFYMALGFYALSLIFAVF. The Cytoplasmic portion of the chain corresponds to 603-613; it reads ASNKKVTASLR.

This sequence belongs to the major facilitator superfamily.

It is found in the cell membrane. In terms of biological role, transporter protein required for adaptation to high stress imposed by low-chain organic acids, in particular by acetic acid, and for resistance to azoles, especially to ketoconazole and fluconazole. The polypeptide is Azole resistance protein 1 (AZR1) (Saccharomyces cerevisiae (strain ATCC 204508 / S288c) (Baker's yeast)).